The chain runs to 166 residues: Phosphopantetheine adenylyltransferase (166 aa).

Thr-9 is a substrate binding site. Residues 9-10 (TF) and His-17 contribute to the ATP site. Positions 41, 78, and 92 each coordinate substrate. ATP is bound by residues 93-95 (GLR), Glu-103, and 128-134 (HQAIASK).

It belongs to the bacterial CoaD family. In terms of assembly, homohexamer. Mg(2+) is required as a cofactor.

It is found in the cytoplasm. The catalysed reaction is (R)-4'-phosphopantetheine + ATP + H(+) = 3'-dephospho-CoA + diphosphate. The protein operates within cofactor biosynthesis; coenzyme A biosynthesis; CoA from (R)-pantothenate: step 4/5. Its function is as follows. Reversibly transfers an adenylyl group from ATP to 4'-phosphopantetheine, yielding dephospho-CoA (dPCoA) and pyrophosphate. This is Phosphopantetheine adenylyltransferase from Roseobacter denitrificans (strain ATCC 33942 / OCh 114) (Erythrobacter sp. (strain OCh 114)).